Here is a 480-residue protein sequence, read N- to C-terminus: 3-isopropylmalate dehydratase large subunit (480 aa).

[4Fe-4S] cluster contacts are provided by Cys-357, Cys-417, and Cys-420. Over residues 431–441 the composition is skewed to polar residues; the sequence is GQRCASTSNRN. Residues 431-454 form a disordered region; that stretch reads GQRCASTSNRNFEGRQGKGGRTHL.

It belongs to the aconitase/IPM isomerase family. LeuC type 1 subfamily. Heterodimer of LeuC and LeuD. It depends on [4Fe-4S] cluster as a cofactor.

It catalyses the reaction (2R,3S)-3-isopropylmalate = (2S)-2-isopropylmalate. It participates in amino-acid biosynthesis; L-leucine biosynthesis; L-leucine from 3-methyl-2-oxobutanoate: step 2/4. In terms of biological role, catalyzes the isomerization between 2-isopropylmalate and 3-isopropylmalate, via the formation of 2-isopropylmaleate. The protein is 3-isopropylmalate dehydratase large subunit of Mycobacteroides abscessus (strain ATCC 19977 / DSM 44196 / CCUG 20993 / CIP 104536 / JCM 13569 / NCTC 13031 / TMC 1543 / L948) (Mycobacterium abscessus).